The following is a 411-amino-acid chain: Trigger factor (411 aa).

The region spanning glutamate 162 to isoleucine 240 is the PPIase FKBP-type domain.

This sequence belongs to the FKBP-type PPIase family. Tig subfamily.

It is found in the cytoplasm. The catalysed reaction is [protein]-peptidylproline (omega=180) = [protein]-peptidylproline (omega=0). Involved in protein export. Acts as a chaperone by maintaining the newly synthesized protein in an open conformation. Functions as a peptidyl-prolyl cis-trans isomerase. This is Trigger factor from Thermodesulfovibrio yellowstonii (strain ATCC 51303 / DSM 11347 / YP87).